The following is a 64-amino-acid chain: Large ribosomal subunit protein bL35 (64 aa).

Residues Met1 to Arg45 are compositionally biased toward basic residues. The disordered stretch occupies residues Met1–Pro64.

The protein belongs to the bacterial ribosomal protein bL35 family.

This chain is Large ribosomal subunit protein bL35, found in Natranaerobius thermophilus (strain ATCC BAA-1301 / DSM 18059 / JW/NM-WN-LF).